The primary structure comprises 257 residues: MGNGECLEGGRKAAVILTSSRHAIAFTGAGISTESGIPDFRGPQGLWRRFDPALASIDYLNTDPKGFWEFYIERFRVLNNARPNKAHLALAELEKLGIIKYVITQNIDNLHQSAGSINVIELHGNYTTVYCMRCKTQYPFTLALRKYEEGENPPRCPKCGGILRPNVVLFGEPVNEINRALEIAALSDVALVVGSSLTVYPAAYVPLVVKEHGGRLIIINLEPTDYDDYADVVLHCSASEALDLVLNEVKGIMAAGN.

A Deacetylase sirtuin-type domain is found at 3 to 252 (NGECLEGGRK…DLVLNEVKGI (250 aa)). Positions 29, 33, 40, 41, 105, 107, 108, and 123 each coordinate NAD(+). Phenylalanine 40 provides a ligand contact to nicotinamide. Residues isoleucine 107 and aspartate 108 each contribute to the nicotinamide site. Residue histidine 123 is the Proton acceptor of the active site. The Zn(2+) site is built by cysteine 131, cysteine 134, cysteine 156, and cysteine 159. The NAD(+) site is built by serine 195, serine 196, and asparagine 220.

This sequence belongs to the sirtuin family. Class U subfamily. Zn(2+) serves as cofactor.

Its subcellular location is the cytoplasm. It carries out the reaction N(6)-acetyl-L-lysyl-[protein] + NAD(+) + H2O = 2''-O-acetyl-ADP-D-ribose + nicotinamide + L-lysyl-[protein]. In terms of biological role, NAD-dependent protein deacetylase which modulates the activities of several enzymes which are inactive in their acetylated form. Deacetylates the N-terminal lysine residue of Alba, the major archaeal chromatin protein and that, in turn, increases Alba's DNA binding affinity, thereby repressing transcription. This chain is NAD-dependent protein deacetylase, found in Caldivirga maquilingensis (strain ATCC 700844 / DSM 13496 / JCM 10307 / IC-167).